The following is a 549-amino-acid chain: Arginine--tRNA ligase (549 aa).

The 'HIGH' region signature appears at 132 to 142; sequence ANPTGPLHIGH.

Belongs to the class-I aminoacyl-tRNA synthetase family. In terms of assembly, monomer.

It localises to the cytoplasm. It catalyses the reaction tRNA(Arg) + L-arginine + ATP = L-arginyl-tRNA(Arg) + AMP + diphosphate. The chain is Arginine--tRNA ligase from Paenarthrobacter aurescens (strain TC1).